A 207-amino-acid polypeptide reads, in one-letter code: LexA repressor (207 aa).

The segment at residues 28–48 (RAEIARELGFRSANAAEEHLK) is a DNA-binding region (H-T-H motif). Active-site for autocatalytic cleavage activity residues include Ser124 and Lys161.

The protein belongs to the peptidase S24 family. Homodimer.

It catalyses the reaction Hydrolysis of Ala-|-Gly bond in repressor LexA.. Functionally, represses a number of genes involved in the response to DNA damage (SOS response), including recA and lexA. In the presence of single-stranded DNA, RecA interacts with LexA causing an autocatalytic cleavage which disrupts the DNA-binding part of LexA, leading to derepression of the SOS regulon and eventually DNA repair. This Vibrio vulnificus (strain CMCP6) protein is LexA repressor.